Reading from the N-terminus, the 406-residue chain is Succinylornithine transaminase (406 aa).

K252 is subject to N6-(pyridoxal phosphate)lysine.

Belongs to the class-III pyridoxal-phosphate-dependent aminotransferase family. AstC subfamily. Requires pyridoxal 5'-phosphate as cofactor.

It catalyses the reaction N(2)-succinyl-L-ornithine + 2-oxoglutarate = N-succinyl-L-glutamate 5-semialdehyde + L-glutamate. The protein operates within amino-acid degradation; L-arginine degradation via AST pathway; L-glutamate and succinate from L-arginine: step 3/5. Its function is as follows. Catalyzes the transamination of N(2)-succinylornithine and alpha-ketoglutarate into N(2)-succinylglutamate semialdehyde and glutamate. Can also act as an acetylornithine aminotransferase. This is Succinylornithine transaminase from Citrobacter koseri (strain ATCC BAA-895 / CDC 4225-83 / SGSC4696).